The primary structure comprises 726 residues: Elongation factor 2 (726 aa).

The region spanning 19–260 (DRIRNIGICA…MVIKHLPSPP (242 aa)) is the tr-type G domain. GTP contacts are provided by residues 28-35 (AHIDHGKT), 94-98 (DTPGH), and 148-151 (NKVD). His-602 bears the Diphthamide mark.

It belongs to the TRAFAC class translation factor GTPase superfamily. Classic translation factor GTPase family. EF-G/EF-2 subfamily.

The protein resides in the cytoplasm. In terms of biological role, catalyzes the GTP-dependent ribosomal translocation step during translation elongation. During this step, the ribosome changes from the pre-translocational (PRE) to the post-translocational (POST) state as the newly formed A-site-bound peptidyl-tRNA and P-site-bound deacylated tRNA move to the P and E sites, respectively. Catalyzes the coordinated movement of the two tRNA molecules, the mRNA and conformational changes in the ribosome. The chain is Elongation factor 2 (fusA) from Methanocaldococcus jannaschii (strain ATCC 43067 / DSM 2661 / JAL-1 / JCM 10045 / NBRC 100440) (Methanococcus jannaschii).